Reading from the N-terminus, the 1170-residue chain is Cellulose synthase-like protein D2 (1170 aa).

Disordered stretches follow at residues M1–G75 and N269–S295. Residues R10–G24 show a composition bias toward low complexity. Residues N273–G288 show a composition bias toward gly residues. Transmembrane regions (helical) follow at residues V311 to A331 and A341 to L361. The active site involves D441. The stretch at H527–K551 forms a coiled coil. D873 is a catalytic residue. Helical transmembrane passes span I955–V975, T981–I1001, L1027–L1047, S1070–F1090, L1104–G1124, and T1134–I1154.

This sequence belongs to the glycosyltransferase 2 family. Plant cellulose synthase-like D subfamily.

Its subcellular location is the golgi apparatus membrane. Its function is as follows. Thought to be a Golgi-localized beta-glycan synthase that polymerize the backbones of noncellulosic polysaccharides (hemicelluloses) of plant cell wall. This is Cellulose synthase-like protein D2 (CSLD2) from Oryza sativa subsp. indica (Rice).